The primary structure comprises 407 residues: 4-hydroxy-3-methylbut-2-en-1-yl diphosphate synthase (flavodoxin) (407 aa).

C296, C299, C342, and E349 together coordinate [4Fe-4S] cluster.

This sequence belongs to the IspG family. [4Fe-4S] cluster is required as a cofactor.

It catalyses the reaction (2E)-4-hydroxy-3-methylbut-2-enyl diphosphate + oxidized [flavodoxin] + H2O + 2 H(+) = 2-C-methyl-D-erythritol 2,4-cyclic diphosphate + reduced [flavodoxin]. The protein operates within isoprenoid biosynthesis; isopentenyl diphosphate biosynthesis via DXP pathway; isopentenyl diphosphate from 1-deoxy-D-xylulose 5-phosphate: step 5/6. In terms of biological role, converts 2C-methyl-D-erythritol 2,4-cyclodiphosphate (ME-2,4cPP) into 1-hydroxy-2-methyl-2-(E)-butenyl 4-diphosphate. This is 4-hydroxy-3-methylbut-2-en-1-yl diphosphate synthase (flavodoxin) from Methylococcus capsulatus (strain ATCC 33009 / NCIMB 11132 / Bath).